A 206-amino-acid polypeptide reads, in one-letter code: Dephospho-CoA kinase (206 aa).

The 197-residue stretch at 4–200 (TVALTGGIGS…ASYLKLASQF (197 aa)) folds into the DPCK domain. 12–17 (GSGKST) is an ATP binding site.

This sequence belongs to the CoaE family.

Its subcellular location is the cytoplasm. The enzyme catalyses 3'-dephospho-CoA + ATP = ADP + CoA + H(+). It functions in the pathway cofactor biosynthesis; coenzyme A biosynthesis; CoA from (R)-pantothenate: step 5/5. Its function is as follows. Catalyzes the phosphorylation of the 3'-hydroxyl group of dephosphocoenzyme A to form coenzyme A. In Salmonella choleraesuis (strain SC-B67), this protein is Dephospho-CoA kinase.